Consider the following 309-residue polypeptide: Aspartate carbamoyltransferase catalytic subunit (309 aa).

Residues Arg55 and Thr56 each coordinate carbamoyl phosphate. An L-aspartate-binding site is contributed by Lys85. Carbamoyl phosphate contacts are provided by Arg106, His135, and Gln138. L-aspartate contacts are provided by Arg168 and Arg230. Carbamoyl phosphate contacts are provided by Leu268 and Pro269.

Belongs to the aspartate/ornithine carbamoyltransferase superfamily. ATCase family. As to quaternary structure, heterododecamer (2C3:3R2) of six catalytic PyrB chains organized as two trimers (C3), and six regulatory PyrI chains organized as three dimers (R2).

It carries out the reaction carbamoyl phosphate + L-aspartate = N-carbamoyl-L-aspartate + phosphate + H(+). The protein operates within pyrimidine metabolism; UMP biosynthesis via de novo pathway; (S)-dihydroorotate from bicarbonate: step 2/3. Its function is as follows. Catalyzes the condensation of carbamoyl phosphate and aspartate to form carbamoyl aspartate and inorganic phosphate, the committed step in the de novo pyrimidine nucleotide biosynthesis pathway. This is Aspartate carbamoyltransferase catalytic subunit from Aliivibrio fischeri (strain MJ11) (Vibrio fischeri).